Here is a 585-residue protein sequence, read N- to C-terminus: MGQGDESERIVINVGGTRHQTYRSTLRTLPGTRLAWLAEPDAHSHFDYDPRADEFFFDRHPGVFAHILNYYRTGKLHCPADVCGPLYEEELAFWGIDETDVEPCCWMTYRQHRDAEEALDSFGGAPLDNSADDADADGPGDSGDGEDELEMTKRLALSDSPDGRPGGFWRRWQPRIWALFEDPYSSRYARYVAFASLFFILVSITTFCLETHERFNPIVNKTEIENVRNGTQVRYYREAETEAFLTYIEGVCVVWFTFEFLMRVVFCPNKVEFIKNSLNIIDFVAILPFYLEVGLSGLSSKAAKDVLGFLRVVRFVRILRIFKLTRHFVGLRVLGHTLRASTNEFLLLIIFLALGVLIFATMIYYAERIGAQPNDPSASEHTHFKNIPIGFWWAVVTMTTLGYGDMYPQTWSGMLVGALCALAGVLTIAMPVPVIVNNFGMYYSLAMAKQKLPKKKKKHIPRPPQLGSPNYCKSVVNSPHHSTQSDTCPLAQEEILEINRADSKLNGEVAKAALANEDCPHIDQALTPDEGLPFTRSGTRERYGPCFLLSTGEYACPPGGGMRKDLCKESPVIAKYMPTEAVRVT.

Topologically, residues 1–190 (MGQGDESERI…EDPYSSRYAR (190 aa)) are cytoplasmic. Serine 44 carries the phosphoserine modification. Histidine 77, cysteine 83, cysteine 104, and cysteine 105 together coordinate Zn(2+). The segment at 121–147 (SFGGAPLDNSADDADADGPGDSGDGED) is disordered. Phosphoserine occurs at positions 130, 142, 158, and 160. Residues 130 to 147 (SADDADADGPGDSGDGED) are compositionally biased toward acidic residues. The chain crosses the membrane as a helical span at residues 191–209 (YVAFASLFFILVSITTFCL). Residues asparagine 220 and asparagine 229 are each glycosylated (N-linked (GlcNAc...) asparagine). The helical transmembrane segment at 248–267 (IEGVCVVWFTFEFLMRVVFC) threads the bilayer. The Cytoplasmic segment spans residues 268 to 276 (PNKVEFIKN). The helical transmembrane segment at 277–295 (SLNIIDFVAILPFYLEVGL) threads the bilayer. The helical; Voltage-sensor transmembrane segment at 309–331 (FLRVVRFVRILRIFKLTRHFVGL) threads the bilayer. Residues 332–344 (RVLGHTLRASTNE) are Cytoplasmic-facing. The chain crosses the membrane as a helical span at residues 345–366 (FLLLIIFLALGVLIFATMIYYA). K(+) is bound by residues threonine 400, leucine 401, glycine 402, and tyrosine 403. Positions 400–405 (TLGYGD) match the Selectivity filter motif. Residues 415–436 (LVGALCALAGVLTIAMPVPVIV) form a helical membrane-spanning segment. Topologically, residues 437–585 (NNFGMYYSLA…YMPTEAVRVT (149 aa)) are cytoplasmic. The residue at position 474 (serine 474) is a Phosphoserine. At threonine 483 the chain carries Phosphothreonine.

It belongs to the potassium channel family. C (Shaw) (TC 1.A.1.2) subfamily. Kv3.1/KCNC1 sub-subfamily. Homotetramer. Homomultimer. Heteromultimer with KCNG3, KCNG4 and KCNV2. Heteromultimer with KCNC2. Heterotetramer with KCNC3. Interacts with the ancillary subunits KCNE1 and KCNE2; the interaction modulates channel activity. In terms of processing, N-glycosylated; contains sialylated glycans. As to expression, expressed in brain. Expressed in globus pallidal neurons of the basal ganglia (at protein level). Detected on Purkinje cells in the cerebellum molecular layer (at protein level).

The protein localises to the cell membrane. The protein resides in the cell projection. It is found in the axon. Its subcellular location is the presynaptic cell membrane. The enzyme catalyses K(+)(in) = K(+)(out). In terms of biological role, voltage-gated potassium channel that opens in response to the voltage difference across the membrane and through which potassium ions pass in accordance with their electrochemical gradient. The mechanism is time-dependent and inactivation is slow. Plays an important role in the rapid repolarization of fast-firing brain neurons. Can form functional homotetrameric channels and heterotetrameric channels that contain variable proportions of KCNC2, and possibly other family members as well. Contributes to fire sustained trains of very brief action potentials at high frequency in pallidal neurons. This is Voltage-gated potassium channel KCNC1 from Rattus norvegicus (Rat).